Reading from the N-terminus, the 361-residue chain is Mitochondrial import receptor subunit TOM40 homolog (361 aa).

A disordered region spans residues 1–73 (MGNVLAASSP…GAAAASEDGS (73 aa)). The span at 11–36 (PAGPPPPPTPSLVGLPPPPPSPPGFT) shows a compositional bias: pro residues. The segment covering 40–50 (LGGGLGTGSST) has biased composition (gly residues). Residues 51–69 (GRGSERTPGAAASGAAAAS) show a composition bias toward low complexity.

This sequence belongs to the Tom40 family. As to quaternary structure, forms part of the preprotein translocase complex of the outer mitochondrial membrane (TOM complex) which consists of at least 7 different proteins (TOMM5, TOMM6, TOMM7, TOMM20, TOMM22, TOMM40 and TOMM70). Interacts with mitochondrial targeting sequences. Interacts with TIMM29; linking the TIM22 complex to the TOM complex. Forms a complex with BCAP31 (via C-terminus) which mediates the translocation of components of the mitochondrial membrane respiratory chain NADH dehydrogenase (Complex I) from the cytosol to the mitochondria. Interacts (via N-terminus) with CYP1A1 (via mitochondrial targeting signal); this interaction is required for CYP1A1 translocation across the mitochondrial outer membrane.

Its subcellular location is the mitochondrion outer membrane. Its function is as follows. Channel-forming protein essential for import of protein precursors into mitochondria. Plays a role in the assembly of the mitochondrial membrane respiratory chain NADH dehydrogenase (Complex I) by forming a complex with BCAP31 and mediating the translocation of Complex I components from the cytosol to the mitochondria. In Mus musculus (Mouse), this protein is Mitochondrial import receptor subunit TOM40 homolog (Tomm40).